The following is a 320-amino-acid chain: Cytochrome f (320 aa).

An N-terminal signal peptide occupies residues 1 to 35 (MQTRNTFSWIREEITRSISVSLMIYIITWASISSA). Residues Y36, C56, C59, and H60 each contribute to the heme site. A helical transmembrane segment spans residues 286-306 (VQGLLFFLGSVVLAQIFLVLK).

Belongs to the cytochrome f family. The 4 large subunits of the cytochrome b6-f complex are cytochrome b6, subunit IV (17 kDa polypeptide, petD), cytochrome f and the Rieske protein, while the 4 small subunits are PetG, PetL, PetM and PetN. The complex functions as a dimer. Heme serves as cofactor.

It is found in the plastid. It localises to the chloroplast thylakoid membrane. Its function is as follows. Component of the cytochrome b6-f complex, which mediates electron transfer between photosystem II (PSII) and photosystem I (PSI), cyclic electron flow around PSI, and state transitions. The chain is Cytochrome f from Crucihimalaya wallichii (Rock-cress).